We begin with the raw amino-acid sequence, 181 residues long: Resolvase/recombinase (181 aa).

The region spanning 2-137 is the Resolvase/invertase-type recombinase catalytic domain; the sequence is RLFGYARVST…EGRLEAKAKG (136 aa). The O-(5'-phospho-DNA)-serine intermediate role is filled by Ser-10. The H-T-H motif DNA-binding region spans 161-180; the sequence is AMEIAKRLKIGRSTVYKVLA.

The protein belongs to the site-specific recombinase resolvase family.

In terms of biological role, site-specific recombination protein. In Pseudomonas putida (Arthrobacter siderocapsulatus), this protein is Resolvase/recombinase.